The chain runs to 136 residues: uncharacterized protein (136 aa).

Positions M1 to A19 are cleaved as a signal peptide. Residues F75–F97 traverse the membrane as a helical segment.

The protein localises to the membrane. This is an uncharacterized protein from Saccharomyces cerevisiae (strain ATCC 204508 / S288c) (Baker's yeast).